The following is a 381-amino-acid chain: Protein RecA (381 aa).

79–86 (GPESSGKT) is an ATP binding site.

The protein belongs to the RecA family.

The protein resides in the cytoplasm. Its function is as follows. Can catalyze the hydrolysis of ATP in the presence of single-stranded DNA, the ATP-dependent uptake of single-stranded DNA by duplex DNA, and the ATP-dependent hybridization of homologous single-stranded DNAs. It interacts with LexA causing its activation and leading to its autocatalytic cleavage. This Streptococcus parasanguinis protein is Protein RecA.